Consider the following 234-residue polypeptide: Carboxy-S-adenosyl-L-methionine synthase (234 aa).

Residues Tyr-35, 60–62 (GCS), 83–84 (DN), 109–110 (DI), Asn-124, and Arg-191 contribute to the S-adenosyl-L-methionine site.

This sequence belongs to the class I-like SAM-binding methyltransferase superfamily. Cx-SAM synthase family. As to quaternary structure, homodimer.

The enzyme catalyses prephenate + S-adenosyl-L-methionine = carboxy-S-adenosyl-L-methionine + 3-phenylpyruvate + H2O. Functionally, catalyzes the conversion of S-adenosyl-L-methionine (SAM) to carboxy-S-adenosyl-L-methionine (Cx-SAM). The chain is Carboxy-S-adenosyl-L-methionine synthase from Campylobacter hominis (strain ATCC BAA-381 / DSM 21671 / CCUG 45161 / LMG 19568 / NCTC 13146 / CH001A).